Reading from the N-terminus, the 231-residue chain is MIP18 family protein YHR122W (231 aa).

2 disordered regions span residues 1–26 and 75–100; these read MSEFLNENPDILEENQLPTRKEDSTK and LTSDEDSLPAESEDESVAGGGKEEEE. Ser2 is modified (N-acetylserine). Acidic residues predominate over residues 76 to 90; sequence TSDEDSLPAESEDES.

This sequence belongs to the MIP18 family.

Its function is as follows. May play a role in chromosome segregation through establishment of sister chromatid cohesion. The chain is MIP18 family protein YHR122W from Saccharomyces cerevisiae (strain ATCC 204508 / S288c) (Baker's yeast).